The chain runs to 557 residues: Hydroxylamine reductase (557 aa).

[4Fe-4S] cluster is bound by residues Cys-4, Cys-7, Cys-19, and Cys-26. Hybrid [4Fe-2O-2S] cluster-binding residues include His-253, Glu-277, Cys-321, Cys-408, Cys-436, Cys-461, Glu-495, and Lys-497. Cys-408 carries the cysteine persulfide modification.

It belongs to the HCP family. [4Fe-4S] cluster serves as cofactor. The cofactor is hybrid [4Fe-2O-2S] cluster.

It is found in the cytoplasm. It catalyses the reaction A + NH4(+) + H2O = hydroxylamine + AH2 + H(+). Its function is as follows. Catalyzes the reduction of hydroxylamine to form NH(3) and H(2)O. The chain is Hydroxylamine reductase from Acidithiobacillus ferrooxidans (strain ATCC 53993 / BNL-5-31) (Leptospirillum ferrooxidans (ATCC 53993)).